A 294-amino-acid chain; its full sequence is tRNA dimethylallyltransferase (294 aa).

11–18 is a binding site for ATP; the sequence is GPTAVGKT. 13–18 contacts substrate; it reads TAVGKT. Positions 36 to 39 are interaction with substrate tRNA; the sequence is DSQQ.

The protein belongs to the IPP transferase family. As to quaternary structure, monomer. The cofactor is Mg(2+).

It carries out the reaction adenosine(37) in tRNA + dimethylallyl diphosphate = N(6)-dimethylallyladenosine(37) in tRNA + diphosphate. In terms of biological role, catalyzes the transfer of a dimethylallyl group onto the adenine at position 37 in tRNAs that read codons beginning with uridine, leading to the formation of N6-(dimethylallyl)adenosine (i(6)A). This is tRNA dimethylallyltransferase from Lactococcus lactis subsp. cremoris (strain SK11).